The chain runs to 437 residues: MLDKNKQIWFIGIKGTGMASLALVLHDLGYNVAGSDIEKYTFTQVPLEKAGIEVKNFDPANIKSNAEQVIVKGNAFKQDNPEVAACLDKNVEWQSYPDTVEEIVQMHTSIGVSGTHGKTSTTSLLAHVLGEVAPTSYLIGDGRGKGVEGSRFFVYEADEYRRHFLAYHPDYQIMTNIDFDHPDYFKDQDDYTSAFQTAADQTKKALFVWGDDKRLQSLKTDIPKYTYGFKDTDDFQAVNIEKTTTGSKFNVLAHGKDLGRFEIHLFGDHSILNTTAVIAVAYTEKVPMDDIKEGLLTFKGAKRRFAEKDFGDVSVIDDYAHHPTEMRATIQAARQKFPDKELVVVFQPHTFSRTKKYQKDFEEILRDVDKAYVTPIYASAREASGDISSEDLVNNIPGSEVIDLDNIADLTKHKNAVVVFMGAGDIPKYEDAYEKLL.

Residue Gly-114–Ser-120 coordinates ATP.

The protein belongs to the MurCDEF family.

It localises to the cytoplasm. The catalysed reaction is UDP-N-acetyl-alpha-D-muramate + L-alanine + ATP = UDP-N-acetyl-alpha-D-muramoyl-L-alanine + ADP + phosphate + H(+). It functions in the pathway cell wall biogenesis; peptidoglycan biosynthesis. Cell wall formation. The chain is UDP-N-acetylmuramate--L-alanine ligase from Lactobacillus johnsonii (strain CNCM I-12250 / La1 / NCC 533).